Reading from the N-terminus, the 53-residue chain is Collagen alpha-1(I) chain (53 aa).

Residues 1 to 53 (SYGYBZKSAGVSVPGPMGPSGPRGLPGPPGAPGPZGFZGPPGZPGZPGSSGPM) form a disordered region. Position 7 is an allysine (Lys7). At Ser8 the chain carries Phosphoserine. The segment covering 10–23 (GVSVPGPMGPSGPR) has biased composition (low complexity). Residues Pro26, Pro29, Pro32, Pro41, Pro44, and Pro47 each carry the 4-hydroxyproline modification. Low complexity predominate over residues 34–53 (PZGFZGPPGZPGZPGSSGPM).

It belongs to the fibrillar collagen family. In terms of assembly, trimers of one alpha 2(I) and two alpha 1(I) chains. Interacts with MRC2. Interacts with TRAM2. Interacts with MFAP4 in a Ca (2+)-dependent manner. Contains mostly 4-hydroxyproline. Proline residues at the third position of the tripeptide repeating unit (G-X-Y) are hydroxylated in some or all of the chains. In terms of processing, contains 3-hydroxyproline at a few sites. This modification occurs on the first proline residue in the sequence motif Gly-Pro-Hyp, where Hyp is 4-hydroxyproline. Post-translationally, lysine residues at the third position of the tripeptide repeating unit (G-X-Y) are 5-hydroxylated in some or all of the chains. O-glycosylated on hydroxylated lysine residues. The O-linked glycan consists of a Glc-Gal disaccharide. As to expression, forms the fibrils of tendon, ligaments and bones. In bones the fibrils are mineralized with calcium hydroxyapatite.

The protein localises to the secreted. It localises to the extracellular space. Its subcellular location is the extracellular matrix. In terms of biological role, type I collagen is a member of group I collagen (fibrillar forming collagen). The protein is Collagen alpha-1(I) chain (COL1A1) of Oryctolagus cuniculus (Rabbit).